The primary structure comprises 405 residues: Probable tRNA sulfurtransferase (405 aa).

The region spanning 60-165 (QEVSASLKKI…PDAAYISHEE (106 aa)) is the THUMP domain. Residues 183–184 (ML), 208–209 (HF), Arg265, Gly287, and Gln296 contribute to the ATP site.

It belongs to the ThiI family.

It localises to the cytoplasm. The catalysed reaction is [ThiI sulfur-carrier protein]-S-sulfanyl-L-cysteine + a uridine in tRNA + 2 reduced [2Fe-2S]-[ferredoxin] + ATP + H(+) = [ThiI sulfur-carrier protein]-L-cysteine + a 4-thiouridine in tRNA + 2 oxidized [2Fe-2S]-[ferredoxin] + AMP + diphosphate. It catalyses the reaction [ThiS sulfur-carrier protein]-C-terminal Gly-Gly-AMP + S-sulfanyl-L-cysteinyl-[cysteine desulfurase] + AH2 = [ThiS sulfur-carrier protein]-C-terminal-Gly-aminoethanethioate + L-cysteinyl-[cysteine desulfurase] + A + AMP + 2 H(+). It functions in the pathway cofactor biosynthesis; thiamine diphosphate biosynthesis. Catalyzes the ATP-dependent transfer of a sulfur to tRNA to produce 4-thiouridine in position 8 of tRNAs, which functions as a near-UV photosensor. Also catalyzes the transfer of sulfur to the sulfur carrier protein ThiS, forming ThiS-thiocarboxylate. This is a step in the synthesis of thiazole, in the thiamine biosynthesis pathway. The sulfur is donated as persulfide by IscS. This chain is Probable tRNA sulfurtransferase, found in Streptococcus suis (strain 98HAH33).